A 647-amino-acid chain; its full sequence is Acetyl-coenzyme A synthetase (647 aa).

CoA is bound by residues 190–193 (RGGR) and Thr-310. Residues 386–388 (GEP), 410–415 (DTWWQT), Asp-499, and Arg-514 each bind ATP. Ser-522 is a binding site for CoA. An ATP-binding site is contributed by Arg-525. Positions 536, 538, and 541 each coordinate Mg(2+). Position 583 (Arg-583) interacts with CoA. Lys-608 is modified (N6-acetyllysine).

The protein belongs to the ATP-dependent AMP-binding enzyme family. Mg(2+) serves as cofactor. Acetylated. Deacetylation by the SIR2-homolog deacetylase activates the enzyme.

The enzyme catalyses acetate + ATP + CoA = acetyl-CoA + AMP + diphosphate. In terms of biological role, catalyzes the conversion of acetate into acetyl-CoA (AcCoA), an essential intermediate at the junction of anabolic and catabolic pathways. AcsA undergoes a two-step reaction. In the first half reaction, AcsA combines acetate with ATP to form acetyl-adenylate (AcAMP) intermediate. In the second half reaction, it can then transfer the acetyl group from AcAMP to the sulfhydryl group of CoA, forming the product AcCoA. In Xylella fastidiosa (strain Temecula1 / ATCC 700964), this protein is Acetyl-coenzyme A synthetase.